Here is a 261-residue protein sequence, read N- to C-terminus: NAD-capped RNA hydrolase NudC (261 aa).

Substrate contacts are provided by Lys25 and Arg69. The Zn(2+) site is built by Cys98 and Cys101. Glu111 contacts substrate. The Zn(2+) site is built by Cys116 and Cys119. Substrate is bound at residue Tyr124. The Nudix hydrolase domain occupies 125-248; it reads PQIAPCVIVA…TVARRLIEDT (124 aa). Residues Ala158, Glu174, and Glu178 each coordinate a divalent metal cation. The Nudix box motif lies at 159–180; it reads GFVEVGETLEQAVSREVLEESN. 192-199 contacts substrate; sequence QPWPFPHS. Glu219 lines the a divalent metal cation pocket. Ala241 provides a ligand contact to substrate.

Belongs to the Nudix hydrolase family. NudC subfamily. As to quaternary structure, homodimer. It depends on Mg(2+) as a cofactor. Mn(2+) is required as a cofactor. Requires Zn(2+) as cofactor.

It catalyses the reaction a 5'-end NAD(+)-phospho-ribonucleoside in mRNA + H2O = a 5'-end phospho-adenosine-phospho-ribonucleoside in mRNA + beta-nicotinamide D-ribonucleotide + 2 H(+). It carries out the reaction NAD(+) + H2O = beta-nicotinamide D-ribonucleotide + AMP + 2 H(+). The enzyme catalyses NADH + H2O = reduced beta-nicotinamide D-ribonucleotide + AMP + 2 H(+). Its function is as follows. mRNA decapping enzyme that specifically removes the nicotinamide adenine dinucleotide (NAD) cap from a subset of mRNAs by hydrolyzing the diphosphate linkage to produce nicotinamide mononucleotide (NMN) and 5' monophosphate mRNA. The NAD-cap is present at the 5'-end of some mRNAs and stabilizes RNA against 5'-processing. Has preference for mRNAs with a 5'-end purine. Catalyzes the hydrolysis of a broad range of dinucleotide pyrophosphates. This is NAD-capped RNA hydrolase NudC from Yersinia enterocolitica serotype O:8 / biotype 1B (strain NCTC 13174 / 8081).